The primary structure comprises 148 residues: Flagellar assembly factor FliW (148 aa).

It belongs to the FliW family. Interacts with translational regulator CsrA and flagellin(s).

The protein localises to the cytoplasm. Functionally, acts as an anti-CsrA protein, binds CsrA and prevents it from repressing translation of its target genes, one of which is flagellin. Binds to flagellin and participates in the assembly of the flagellum. The protein is Flagellar assembly factor FliW of Ruminiclostridium cellulolyticum (strain ATCC 35319 / DSM 5812 / JCM 6584 / H10) (Clostridium cellulolyticum).